A 152-amino-acid polypeptide reads, in one-letter code: ARL14 effector protein-like (152 aa).

Polar residues predominate over residues 1 to 16 (MTEPSQKNNSTQQELT). The segment at 1–27 (MTEPSQKNNSTQQELTNHLFPEKSSQI) is disordered.

This Mus musculus (Mouse) protein is ARL14 effector protein-like (Arl14epl).